A 520-amino-acid polypeptide reads, in one-letter code: Cytosol aminopeptidase (520 aa).

Residues L200, M201, K280, and D285 each coordinate Zn(2+). Residues K280, D285, S290, and K292 each coordinate substrate. Residue D285 coordinates Mg(2+). Residue K292 is part of the active site. Zn(2+)-binding residues include R301, D303, D362, and E364. D303 and D362 together coordinate substrate. D362 and E364 together coordinate Mg(2+). R366 is an active-site residue.

The protein belongs to the peptidase M17 family. Homohexamer. Zn(2+) is required as a cofactor. The cofactor is Mn(2+).

The protein resides in the cytoplasm. The enzyme catalyses Release of an N-terminal amino acid, Xaa-|-Yaa-, in which Xaa is preferably Leu, but may be other amino acids including Pro although not Arg or Lys, and Yaa may be Pro. Amino acid amides and methyl esters are also readily hydrolyzed, but rates on arylamides are exceedingly low.. It catalyses the reaction an S-substituted L-cysteinylglycine + H2O = an S-substituted L-cysteine + glycine. It carries out the reaction L-cysteinylglycine + H2O = L-cysteine + glycine. The catalysed reaction is S-benzyl-L-cysteinylglycine + H2O = S-benzyl-L-cysteine + glycine. The enzyme catalyses Release of N-terminal proline from a peptide.. Cytosolic metallopeptidase that catalyzes the removal of unsubstituted N-terminal hydrophobic amino acids from various peptides. The presence of Zn(2+) ions is essential for the peptidase activity, and the association with other cofactors can modulate the substrate spectificity of the enzyme. For instance, in the presence of Mn(2+), it displays a specific Cys-Gly hydrolyzing activity of Cys-Gly-S-conjugates. Involved in the metabolism of glutathione and in the degradation of glutathione S-conjugates, which may play a role in the control of the cell redox status. This is Cytosol aminopeptidase (lap3) from Xenopus tropicalis (Western clawed frog).